The primary structure comprises 23 residues: Potassium channel toxin alpha-KTx 13.1 (23 aa).

Disulfide bonds link Cys2–Cys15, Cys5–Cys20, and Cys9–Cys22. An interaction with Ca(2+)-activated K(+) channels region spans residues 13-20 (GKCINGRC).

As to expression, expressed by the venom gland.

Its subcellular location is the secreted. Blocks reversibly Shaker B potassium channels. Also displaces binding of noxiustoxin to mouse brain synaptosome membranes. In Tityus obscurus (Amazonian scorpion), this protein is Potassium channel toxin alpha-KTx 13.1.